The following is a 459-amino-acid chain: V-type ATP synthase beta chain (459 aa).

It belongs to the ATPase alpha/beta chains family.

Its function is as follows. Produces ATP from ADP in the presence of a proton gradient across the membrane. The V-type beta chain is a regulatory subunit. In Thermoanaerobacter sp. (strain X514), this protein is V-type ATP synthase beta chain.